The sequence spans 490 residues: Actin-related protein 6 (490 aa).

This sequence belongs to the actin family. ARP6 subfamily.

The protein resides in the cytoplasm. Its subcellular location is the cytoskeleton. The sequence is that of Actin-related protein 6 from Dictyostelium discoideum (Social amoeba).